The primary structure comprises 452 residues: Netrin-5 (452 aa).

The first 34 residues, 1-34 (MTDYRTLFSSPGAGSTVTTPITLSLLLLLSQATS), serve as a signal peptide directing secretion. Intrachain disulfides connect C173–C182, C175–C191, C193–C202, C205–C225, C228–C240, C230–C247, C249–C258, C261–C275, C298–C376, C302–C378, and C317–C438. Laminin EGF-like domains lie at 173–227 (CQCH…PCLP) and 228–277 (CQCH…PCQR). The region spanning 298–438 (CQGYCNVSVS…LQQKERGGAC (141 aa)) is the NTR domain. N303 carries an N-linked (GlcNAc...) asparagine glycan.

It localises to the secreted. In terms of biological role, plays a role in neurogenesis. Prevents motor neuron cell body migration out of the neural tube. This chain is Netrin-5 (Ntn5), found in Mus musculus (Mouse).